A 204-amino-acid polypeptide reads, in one-letter code: Large ribosomal subunit protein eL15 (204 aa).

The N-myristoyl glycine moiety is linked to residue Gly2. Ser34 carries the phosphoserine modification. A Glycyl lysine isopeptide (Lys-Gly) (interchain with G-Cter in SUMO2) cross-link involves residue Lys83. Phosphoserine is present on residues Ser97 and Ser100. The interval 165–186 (TSAGRKSRGLGKGHKFHHTIGG) is disordered. Residues 169 to 182 (RKSRGLGKGHKFHH) are compositionally biased toward basic residues.

The protein belongs to the eukaryotic ribosomal protein eL15 family. In terms of assembly, component of the large ribosomal subunit. Interacts with IFIT1 (via TPR repeats 1-4).

It is found in the cytoplasm. Functionally, component of the large ribosomal subunit. The ribosome is a large ribonucleoprotein complex responsible for the synthesis of proteins in the cell. The protein is Large ribosomal subunit protein eL15 (RPL15) of Bos taurus (Bovine).